A 394-amino-acid chain; its full sequence is 8-amino-7-oxononanoate synthase (394 aa).

Arginine 21 provides a ligand contact to substrate. 112–113 is a pyridoxal 5'-phosphate binding site; it reads GY. Substrate is bound at residue histidine 137. The pyridoxal 5'-phosphate site is built by serine 183, histidine 211, and threonine 239. At lysine 242 the chain carries N6-(pyridoxal phosphate)lysine. Position 358 (threonine 358) interacts with substrate.

This sequence belongs to the class-II pyridoxal-phosphate-dependent aminotransferase family. BioF subfamily. As to quaternary structure, homodimer. It depends on pyridoxal 5'-phosphate as a cofactor.

It carries out the reaction 6-carboxyhexanoyl-[ACP] + L-alanine + H(+) = (8S)-8-amino-7-oxononanoate + holo-[ACP] + CO2. The protein operates within cofactor biosynthesis; biotin biosynthesis. Its function is as follows. Catalyzes the decarboxylative condensation of pimeloyl-[acyl-carrier protein] and L-alanine to produce 8-amino-7-oxononanoate (AON), [acyl-carrier protein], and carbon dioxide. In Burkholderia thailandensis (strain ATCC 700388 / DSM 13276 / CCUG 48851 / CIP 106301 / E264), this protein is 8-amino-7-oxononanoate synthase.